We begin with the raw amino-acid sequence, 492 residues long: Catalase-2 (492 aa).

Active-site residues include H65 and N138. Position 348 (Y348) interacts with heme.

The protein belongs to the catalase family. As to quaternary structure, homotetramer and heterotetramer. At least six or seven isozymes are produced from a mixture of 3 gene products. Interacts with NCA1. Interacts with LSD1. It depends on heme as a cofactor.

The protein localises to the cytoplasm. It is found in the cytosol. Its subcellular location is the peroxisome matrix. It carries out the reaction 2 H2O2 = O2 + 2 H2O. In terms of biological role, catalyzes the degradation of hydrogen peroxide (H(2)O(2)) generated by peroxisomal oxidases to water and oxygen, thereby protecting cells from the toxic effects of hydrogen peroxide. In Arabidopsis thaliana (Mouse-ear cress), this protein is Catalase-2 (CAT2).